Reading from the N-terminus, the 111-residue chain is Photosystem II reaction center Psb28 protein (111 aa).

This sequence belongs to the Psb28 family. In terms of assembly, part of the photosystem II complex.

The protein localises to the cellular thylakoid membrane. This Trichormus variabilis (strain ATCC 29413 / PCC 7937) (Anabaena variabilis) protein is Photosystem II reaction center Psb28 protein.